The following is a 1279-amino-acid chain: Cellulose synthase operon protein C (1279 aa).

The N-terminal stretch at 1 to 21 (MRRHTLAIAILAALASTASVA) is a signal peptide. TPR repeat units follow at residues 27–60 (QSLL…SPDQ), 62–94 (DALY…SPVP), 218–250 (ADET…HPDD), 306–339 (VDAL…PGGA), 384–417 (PGAA…HPGD), 460–493 (ALRA…DPEN), 495–527 (WTRF…QPNQ), 606–639 (PERV…NPNP), 719–752 (ALGV…NPNN), and 787–820 (PEIL…ENAM).

It functions in the pathway glycan metabolism; bacterial cellulose biosynthesis. Functionally, required for maximal bacterial cellulose synthesis. The sequence is that of Cellulose synthase operon protein C (bscS) from Pseudomonas fluorescens (strain SBW25).